The chain runs to 130 residues: Cyclin-dependent kinase 4 inhibitor B (130 aa).

ANK repeat units lie at residues 5 to 34 (SSDA…DPNA), 38 to 66 (FGRR…EPNC), 71 to 100 (TLTR…RLDV), and 104 to 130 (WGRL…ATGD). Threonine 12 is modified (phosphothreonine).

It belongs to the CDKN2 cyclin-dependent kinase inhibitor family. Heterodimer of CDKN2B with CDK4 or CDK6. Expressed ubiquitously.

Interacts strongly with CDK4 and CDK6. Potent inhibitor. Potential effector of TGF-beta induced cell cycle arrest. This is Cyclin-dependent kinase 4 inhibitor B (Cdkn2b) from Mus musculus (Mouse).